Reading from the N-terminus, the 247-residue chain is Granulin (247 aa).

This sequence belongs to the polyhedrin family.

In terms of biological role, component of the virus occlusion bodies, which are large proteinaceous structures, that protect the virus from the outside environment for extended periods until they are ingested by insect larvae. The sequence is that of Granulin from Pieris brassicae granulosis virus (PbGV).